The primary structure comprises 348 residues: Mitogen-activated protein kinase 14B (348 aa).

Residues 25–309 form the Protein kinase domain; it reads YQNLSPVGSG…ASQALAHPYF (285 aa). Residues 31 to 39 and Lys54 contribute to the ATP site; that span reads VGSGAYGSV. The active-site Proton acceptor is Asp169. Thr181 bears the Phosphothreonine; by MAP2K3 mark. The short motif at 181–183 is the TXY element; the sequence is TGY. The residue at position 183 (Tyr183) is a Phosphotyrosine; by MAP2K3.

This sequence belongs to the protein kinase superfamily. CMGC Ser/Thr protein kinase family. MAP kinase subfamily. It depends on Mg(2+) as a cofactor. In terms of processing, dually phosphorylated on Thr-181 and Tyr-183, which activates the enzyme.

It is found in the cytoplasm. Its subcellular location is the nucleus. It catalyses the reaction L-seryl-[protein] + ATP = O-phospho-L-seryl-[protein] + ADP + H(+). The enzyme catalyses L-threonyl-[protein] + ATP = O-phospho-L-threonyl-[protein] + ADP + H(+). Activated by threonine and tyrosine phosphorylation by the dual specificity kinase, MKK3. In terms of biological role, serine/threonine kinase which acts as an essential component of the MAP kinase signal transduction pathway. Mapk14b is one of the four p38 MAPKs which play an important role in the cascades of cellular responses evoked by extracellular stimuli such as pro-inflammatory cytokines or physical stress leading to direct activation of transcription factors. Accordingly, p38 MAPKs phosphorylate a broad range of proteins and it has been estimated that they may have approximately 200 to 300 substrates each. Some of the targets are downstream kinases which are activated through phosphorylation and further phosphorylate additional targets. This Danio rerio (Zebrafish) protein is Mitogen-activated protein kinase 14B (mapk14b).